A 629-amino-acid polypeptide reads, in one-letter code: LEAF RUST 10 DISEASE-RESISTANCE LOCUS RECEPTOR-LIKE PROTEIN KINASE-like 1.1 (629 aa).

The first 19 residues, M1 to A19, serve as a signal peptide directing secretion. Topologically, residues R20–L225 are extracellular. N56, N92, N123, N124, N172, and N177 each carry an N-linked (GlcNAc...) asparagine glycan. The chain crosses the membrane as a helical span at residues G226–I246. At H247 to F629 the chain is on the cytoplasmic side. Residues F291–K565 enclose the Protein kinase domain. Residues L297 to V305 and K319 each bind ATP. A Phosphotyrosine modification is found at Y365. The Proton acceptor role is filled by D416. Phosphoserine is present on S449. T450 and T455 each carry phosphothreonine. Position 463 is a phosphotyrosine (Y463). Positions V609–F629 are disordered.

The protein belongs to the protein kinase superfamily. Ser/Thr protein kinase family.

Its subcellular location is the cell membrane. It carries out the reaction L-seryl-[protein] + ATP = O-phospho-L-seryl-[protein] + ADP + H(+). The enzyme catalyses L-threonyl-[protein] + ATP = O-phospho-L-threonyl-[protein] + ADP + H(+). This Arabidopsis thaliana (Mouse-ear cress) protein is LEAF RUST 10 DISEASE-RESISTANCE LOCUS RECEPTOR-LIKE PROTEIN KINASE-like 1.1.